The following is a 618-amino-acid chain: DNA mismatch repair protein MutL (618 aa).

A compositionally biased stretch (low complexity) spans 367–381; that stretch reads EPTAAREPATPRYSG. The disordered stretch occupies residues 367–402; the sequence is EPTAAREPATPRYSGGASGGNGGRQSAGGWPHAQPG. A compositionally biased stretch (gly residues) spans 382–392; the sequence is GASGGNGGRQS.

This sequence belongs to the DNA mismatch repair MutL/HexB family.

Its function is as follows. This protein is involved in the repair of mismatches in DNA. It is required for dam-dependent methyl-directed DNA mismatch repair. May act as a 'molecular matchmaker', a protein that promotes the formation of a stable complex between two or more DNA-binding proteins in an ATP-dependent manner without itself being part of a final effector complex. This Salmonella gallinarum (strain 287/91 / NCTC 13346) protein is DNA mismatch repair protein MutL.